We begin with the raw amino-acid sequence, 471 residues long: Ribosome biogenesis protein YTM1 (471 aa).

Positions 10–92 (VTARFTTRDE…ETRLEVEYTR (83 aa)) are ubiquitin-like (UBL) domain. WD repeat units lie at residues 119-158 (SRAG…LATS), 165-203 (GRIT…RTIT), and 210-249 (SHRW…NPVA). The tract at residues 245–274 (ENPVAPSSLLPNSTAASNKRQKLSKPDRTV) is disordered. Polar residues predominate over residues 253–262 (LLPNSTAASN). 4 WD repeats span residues 285–325 (GHSS…CVDT), 327–366 (TTGH…TQIS), 372–412 (GHKN…TGGQ), and 436–471 (GHGE…ALGS). Residues 412-440 (QVGEGQQGESVHTIHRQGQSGPGKGHGEG) are disordered.

Belongs to the WD repeat WDR12/YTM1 family. In terms of assembly, component of the NOP7 complex, composed of ERB1, NOP7 and YTM1. The complex is held together by ERB1, which interacts with NOP7 via its N-terminal domain and with YTM1 via a high-affinity interaction between the seven-bladed beta-propeller domains of the 2 proteins. The NOP7 complex associates with the 66S pre-ribosome. Interacts (via UBL domain) with MDN1 (via VWFA/MIDAS domain).

Its subcellular location is the nucleus. It is found in the nucleolus. The protein resides in the nucleoplasm. Functionally, component of the NOP7 complex, which is required for maturation of the 25S and 5.8S ribosomal RNAs and formation of the 60S ribosome. The sequence is that of Ribosome biogenesis protein YTM1 from Phaeosphaeria nodorum (strain SN15 / ATCC MYA-4574 / FGSC 10173) (Glume blotch fungus).